Reading from the N-terminus, the 556-residue chain is Formate--tetrahydrofolate ligase (556 aa).

ATP is bound at residue 65–72; sequence TPAGEGKS.

The protein belongs to the formate--tetrahydrofolate ligase family.

The enzyme catalyses (6S)-5,6,7,8-tetrahydrofolate + formate + ATP = (6R)-10-formyltetrahydrofolate + ADP + phosphate. Its pathway is one-carbon metabolism; tetrahydrofolate interconversion. The chain is Formate--tetrahydrofolate ligase from Clostridium botulinum (strain Alaska E43 / Type E3).